Here is a 293-residue protein sequence, read N- to C-terminus: MEVIEGKMPFMGYETYYRIVGRRSEKTPLVLLHGGPGSSHNYFEVLDKLAEIDNRRIIMYDQLGCGKSSIPDDHPELYTKETWVKELMALREHLALRKIHLLGQSWGGMLALIYMCDYHPVGIQSLILSSTLSSASLWSKELHRMIKYLPIEEQAAIHRAELTSNFNDPDYLKANEHFMNQHAIDMTKTWPECVMRKKCGGIVAYETAWGPNEYTPEGNLHDYEYTEKLGKIKIPTLITSGTDDLCTPYVAKTMQDHLAGSKWQLFENCGHMSFVEKTDEYVEMLRKWLDQHD.

In terms of domain architecture, AB hydrolase-1 spans 28–277; it reads PLVLLHGGPG…NCGHMSFVEK (250 aa). S105 (nucleophile) is an active-site residue. Residue D244 is part of the active site. The Proton donor role is filled by H271.

It belongs to the peptidase S33 family.

Its subcellular location is the cell envelope. The catalysed reaction is Release of N-terminal proline from a peptide.. Its function is as follows. Releases the N-terminal proline from various substrates. This Lactobacillus crispatus (strain ST1) protein is Proline iminopeptidase.